A 151-amino-acid chain; its full sequence is Mini-ribonuclease 3 (151 aa).

Aspartate 30 is a catalytic residue.

It belongs to the MrnC RNase family. Homodimer. Mg(2+) serves as cofactor.

It is found in the cytoplasm. Functionally, involved in correct processing of both the 5' and 3' ends of 23S rRNA precursor. Processes 30S rRNA precursor transcript even in absence of ribonuclease 3 (Rnc); Rnc processes 30S rRNA into smaller rRNA precursors. The chain is Mini-ribonuclease 3 from Thermosynechococcus vestitus (strain NIES-2133 / IAM M-273 / BP-1).